Here is a 267-residue protein sequence, read N- to C-terminus: Small ribosomal subunit protein uS3 (267 aa).

The 76-residue stretch at 39-114 (IRKYLETNLK…RVNINIVEIR (76 aa)) folds into the KH type-2 domain. Over residues 229–248 (ANNRGRGNNRGRGNSRQNGG) the composition is skewed to low complexity. Residues 229–267 (ANNRGRGNNRGRGNSRQNGGRSRRPRQGQASTQGRGGNN) are disordered.

Belongs to the universal ribosomal protein uS3 family. As to quaternary structure, part of the 30S ribosomal subunit. Forms a tight complex with proteins S10 and S14.

Binds the lower part of the 30S subunit head. Binds mRNA in the 70S ribosome, positioning it for translation. The protein is Small ribosomal subunit protein uS3 of Oenococcus oeni (strain ATCC BAA-331 / PSU-1).